The sequence spans 521 residues: Na(+)/H(+) antiporter ApNhaP (521 aa).

Residues M1–Q18 are Periplasmic-facing. Residues F19–F39 traverse the membrane as a helical segment. At R40–Q41 the chain is on the cytoplasmic side. The chain crosses the membrane as a helical span at residues I42 to L62. The Periplasmic portion of the chain corresponds to V63–N94. A helical transmembrane segment spans residues L95–F115. Residues S116–P126 are Cytoplasmic-facing. The helical transmembrane segment at I127–F147 threads the bilayer. Over R148–S164 the chain is Periplasmic. A helical transmembrane segment spans residues L165–T185. The Cytoplasmic segment spans residues Q186–L194. The chain crosses the membrane as a helical span at residues I195–I215. Residues S216–E245 lie on the Periplasmic side of the membrane. The chain crosses the membrane as a helical span at residues L246–S266. Over R267–L276 the chain is Cytoplasmic. The chain crosses the membrane as a helical span at residues L277–I297. The Periplasmic segment spans residues G298–Q311. A helical transmembrane segment spans residues L312 to G332. Over T333–T349 the chain is Cytoplasmic. The chain crosses the membrane as a helical span at residues V350–V370. The Periplasmic segment spans residues M371–E380. Residues A381–I401 form a helical membrane-spanning segment. Over E402–E521 the chain is Cytoplasmic.

Belongs to the monovalent cation:proton antiporter 1 (CPA1) transporter (TC 2.A.36) family.

Its subcellular location is the cell inner membrane. Na(+)/H(+) antiporter that extrudes sodium in exchange for external protons. Also shows high Ca(2+)/H(+) antiporter activity at alkaline pH. Does not catalyze exchange between Li(+) and H(+). The polypeptide is Na(+)/H(+) antiporter ApNhaP (apnhaP) (Aphanothece halophytica).